Consider the following 284-residue polypeptide: Proteasome subunit pbs-5 (284 aa).

Positions 1 to 64 (MWGETFDDFE…AGKSMQFRKG (64 aa)) are cleaved as a propeptide — removed in mature form. The Nucleophile role is filled by T65.

Belongs to the peptidase T1B family. In terms of assembly, the 26S proteasome consists of a 20S proteasome core and two 19S regulatory subunits. The 20S proteasome core is composed of 28 subunits that are arranged in four stacked rings, resulting in a barrel-shaped structure. The two end rings are each formed by seven alpha subunits, and the two central rings are each formed by seven beta subunits. The catalytic chamber with the active sites is on the inside of the barrel.

The protein resides in the cytoplasm. It localises to the nucleus. The enzyme catalyses Cleavage of peptide bonds with very broad specificity.. Functionally, component of the 20S core proteasome complex involved in the proteolytic degradation of most intracellular proteins. This complex plays numerous essential roles within the cell by associating with different regulatory particles. Associated with two 19S regulatory particles, forms the 26S proteasome and thus participates in the ATP-dependent degradation of ubiquitinated proteins. The 26S proteasome plays a key role in the maintenance of protein homeostasis by removing misfolded or damaged proteins that could impair cellular functions, and by removing proteins whose functions are no longer required. In Caenorhabditis elegans, this protein is Proteasome subunit pbs-5.